The following is a 419-amino-acid chain: G protein-activated inward rectifier potassium channel 4 (419 aa).

The segment at 1–24 is disordered; sequence MAGDSRNAMNQDMEIGVTPRDPKK. Topologically, residues 1 to 86 are cytoplasmic; that stretch reads MAGDSRNAMN…LFTTLVDLKW (86 aa). A Phosphoserine modification is found at serine 5. Residues 87-111 traverse the membrane as a helical segment; that stretch reads RFNLLVFTMVYTITWLFFGFIWWLI. Residues 112–135 are Extracellular-facing; it reads AYIRGDLDHVGDREWIPCVENLSG. Residues 136–147 constitute an intramembrane region (helical; Pore-forming); it reads FVSAFLFSIETE. The pore-forming intramembrane region spans 148–154; sequence TTIGYGF. The Selectivity filter motif lies at 149–154; that stretch reads TIGYGF. The Extracellular segment spans residues 155-163; that stretch reads RVITEKCPE. A helical membrane pass occupies residues 164-185; that stretch reads GIVLLLVQAILGSIVNAFMVGC. The Cytoplasmic segment spans residues 186–419; sequence MFVKISQPKK…SGSQETKDSA (234 aa). The disordered stretch occupies residues 381-419; the sequence is PSPPLPGGCVGAELGAEAEQEGEEEPEGLSGSQETKDSA. A compositionally biased stretch (acidic residues) spans 396–407; it reads AEAEQEGEEEPE.

The protein belongs to the inward rectifier-type potassium channel (TC 1.A.2.1) family. KCNJ5 subfamily. Associates with KCNJ3/GIRK1 or KCNJ6/GIRK2 to form a G-protein-activated heteromultimer pore-forming unit. The resulting inward current is much larger.

It localises to the membrane. It carries out the reaction K(+)(in) = K(+)(out). With respect to regulation, heteromultimer composed of KCNJ3/GIRK1 and KCNJ5/GIRK4 is activated by phosphatidylinositol 4,5 biphosphate (PtdIns(4,5)P2). Functionally, inward rectifier potassium channels are characterized by a greater tendency to allow potassium to flow into the cell rather than out of it. Their voltage dependence is regulated by the concentration of extracellular potassium; as external potassium is raised, the voltage range of the channel opening shifts to more positive voltages. The inward rectification is mainly due to the blockage of outward current by internal magnesium. This receptor plays a crucial role in regulating the heartbeat. Can be blocked by external barium. This potassium channel is controlled by G proteins. The chain is G protein-activated inward rectifier potassium channel 4 (KCNJ5) from Bos taurus (Bovine).